A 111-amino-acid polypeptide reads, in one-letter code: Probable 4-amino-4-deoxy-L-arabinose-phosphoundecaprenol flippase subunit ArnE (111 aa).

The next 3 helical transmembrane spans lie at 36–56 (IVLWLGLALACIGLAMMLWLL), 61–81 (VPVGIAYPMLSLNFVWVTLAA), and 88–108 (PVSPRHWCGVAFIIGGIVILG). The EamA domain occupies 40-109 (LGLALACIGL…IIGGIVILGS (70 aa)).

It belongs to the ArnE family. In terms of assembly, heterodimer of ArnE and ArnF.

Its subcellular location is the cell inner membrane. Its pathway is bacterial outer membrane biogenesis; lipopolysaccharide biosynthesis. Functionally, translocates 4-amino-4-deoxy-L-arabinose-phosphoundecaprenol (alpha-L-Ara4N-phosphoundecaprenol) from the cytoplasmic to the periplasmic side of the inner membrane. The protein is Probable 4-amino-4-deoxy-L-arabinose-phosphoundecaprenol flippase subunit ArnE of Shigella flexneri serotype 5b (strain 8401).